The chain runs to 555 residues: Acetyl-coenzyme A thioesterase (555 aa).

The HotDog ACOT-type 1 domain maps to 5-117 (APGEVVMSQA…FSTFVAKPVG (113 aa)). At K33 the chain carries N6-succinyllysine. Residues 53-55 (TAS), 82-84 (STS), and R144 each bind CoA. Residues K159 and K228 each carry the N6-succinyllysine modification. Positions 179–294 (RGTSVQSIEL…FLIYNAADDK (116 aa)) constitute a HotDog ACOT-type 2 domain. Position 234-236 (234-236 (KFR)) interacts with CoA. An START domain is found at 340–549 (CIHWDISKQA…IQFLENPPDD (210 aa)).

In terms of assembly, homodimer or homotetramer.

It is found in the cytoplasm. The protein localises to the cytosol. The enzyme catalyses acetyl-CoA + H2O = acetate + CoA + H(+). It carries out the reaction butanoyl-CoA + H2O = butanoate + CoA + H(+). The catalysed reaction is hexanoyl-CoA + H2O = hexanoate + CoA + H(+). It functions in the pathway lipid metabolism; fatty acid metabolism. Inhibited by ADP. Active in the presence of ATP. Cold labile, it dissociates into inactive monomers at low temperature. Its function is as follows. Catalyzes the hydrolysis of acyl-CoAs into free fatty acids and coenzyme A (CoASH), regulating their respective intracellular levels. Preferentially hydrolyzes acetyl-CoA. The chain is Acetyl-coenzyme A thioesterase (ACOT12) from Homo sapiens (Human).